The following is a 70-amino-acid chain: Large ribosomal subunit protein bL32c (70 aa).

Disordered regions lie at residues 1 to 20 (MAVP…KNVR) and 51 to 70 (NDDS…LDDP). Positions 52-61 (DDSSGSSESK) are enriched in polar residues.

This sequence belongs to the bacterial ribosomal protein bL32 family.

The protein localises to the plastid. Its subcellular location is the chloroplast. This Pinus thunbergii (Japanese black pine) protein is Large ribosomal subunit protein bL32c (rpl32).